Reading from the N-terminus, the 52-residue chain is Mitogenic lectin alpha chain (52 aa).

This sequence belongs to the leguminous lectin family. As to quaternary structure, tetramer of two alpha and two beta chains.

This chain is Mitogenic lectin alpha chain, found in Vicia sativa (Spring vetch).